We begin with the raw amino-acid sequence, 131 residues long: Ribonuclease P protein component (131 aa).

Belongs to the RnpA family. Consists of a catalytic RNA component (M1 or rnpB) and a protein subunit.

The enzyme catalyses Endonucleolytic cleavage of RNA, removing 5'-extranucleotides from tRNA precursor.. Its function is as follows. RNaseP catalyzes the removal of the 5'-leader sequence from pre-tRNA to produce the mature 5'-terminus. It can also cleave other RNA substrates such as 4.5S RNA. The protein component plays an auxiliary but essential role in vivo by binding to the 5'-leader sequence and broadening the substrate specificity of the ribozyme. This chain is Ribonuclease P protein component, found in Acinetobacter baylyi (strain ATCC 33305 / BD413 / ADP1).